Reading from the N-terminus, the 122-residue chain is Ribonuclease P protein component (122 aa).

It belongs to the RnpA family. In terms of assembly, consists of a catalytic RNA component (M1 or rnpB) and a protein subunit.

The catalysed reaction is Endonucleolytic cleavage of RNA, removing 5'-extranucleotides from tRNA precursor.. RNaseP catalyzes the removal of the 5'-leader sequence from pre-tRNA to produce the mature 5'-terminus. It can also cleave other RNA substrates such as 4.5S RNA. The protein component plays an auxiliary but essential role in vivo by binding to the 5'-leader sequence and broadening the substrate specificity of the ribozyme. The protein is Ribonuclease P protein component of Lactobacillus gasseri (strain ATCC 33323 / DSM 20243 / BCRC 14619 / CIP 102991 / JCM 1131 / KCTC 3163 / NCIMB 11718 / NCTC 13722 / AM63).